We begin with the raw amino-acid sequence, 886 residues long: Alanine--tRNA ligase (886 aa).

Zn(2+) contacts are provided by His564, His568, Cys676, and His680.

Belongs to the class-II aminoacyl-tRNA synthetase family. The cofactor is Zn(2+).

It is found in the cytoplasm. The catalysed reaction is tRNA(Ala) + L-alanine + ATP = L-alanyl-tRNA(Ala) + AMP + diphosphate. Catalyzes the attachment of alanine to tRNA(Ala) in a two-step reaction: alanine is first activated by ATP to form Ala-AMP and then transferred to the acceptor end of tRNA(Ala). Also edits incorrectly charged Ser-tRNA(Ala) and Gly-tRNA(Ala) via its editing domain. The polypeptide is Alanine--tRNA ligase (Bartonella bacilliformis).